Reading from the N-terminus, the 214-residue chain is Calcineurin B homologous protein 3 (214 aa).

The tract at residues 1 to 20 (MGAAHSASEEVRELEGKTGF) is disordered. Gly-2 is lipidated: N-myristoyl glycine. The span at 7-16 (ASEEVRELEG) shows a compositional bias: basic and acidic residues. Residues 110–145 (SRKEKLRFLFHMYDSDSDGRITLEEYRNVVEELLSG) enclose the EF-hand domain. Ca(2+) is bound by residues Asp-123, Asp-125, Asp-127, Arg-129, and Glu-134.

It belongs to the calcineurin regulatory subunit family. CHP subfamily. As to quaternary structure, monomer. Homodimer; disulfide-linked. Interacts with SLC9A1/NHE1; the interaction enables an optimal Na(+)/H(+) exchange activity. Expressed in mature megakaryocytes and polymorphonuclear granulocytes (at protein level). Abundantly expressed in heart. Also expressed at a lower level in adult testis and salivary gland, and in the placenta.

Its subcellular location is the nucleus. The protein localises to the cytoplasm. It localises to the membrane. The protein resides in the cell membrane. It is found in the cell projection. Its subcellular location is the lamellipodium. The protein localises to the ruffle membrane. Its function is as follows. Functions as an integral cofactor in cell pH regulation by controlling plasma membrane-type Na(+)/H(+) exchange activity. Promotes the maturation, transport, cell surface stability and exchange activity of SLC9A1/NHE1 at the plasma membrane. Promotes the induction of hematopoietic stem cell differentiation toward megakaryocytic lineage. Essential for the coupling of ERK cascade activation with the expression of ETS family genes in megakaryocytic differentiation. Also involved in granulocytic differentiation in a ERK-dependent manner. Inhibits the phosphatase activity of calcineurin. This chain is Calcineurin B homologous protein 3 (TESC), found in Homo sapiens (Human).